A 396-amino-acid polypeptide reads, in one-letter code: Elongation factor Tu (396 aa).

In terms of domain architecture, tr-type G spans 10 to 205 (KTHANIGTIG…AVDDYIPTPE (196 aa)). A G1 region spans residues 19 to 26 (GHVDHGKT). Residue 19-26 (GHVDHGKT) participates in GTP binding. Residue threonine 26 participates in Mg(2+) binding. The G2 stretch occupies residues 61–65 (GITIS). The segment at 82-85 (DCPG) is G3. GTP is bound by residues 82–86 (DCPGH) and 137–140 (NKCD). The interval 137–140 (NKCD) is G4. Positions 175–177 (SAL) are G5.

It belongs to the TRAFAC class translation factor GTPase superfamily. Classic translation factor GTPase family. EF-Tu/EF-1A subfamily. Monomer.

It is found in the cytoplasm. The catalysed reaction is GTP + H2O = GDP + phosphate + H(+). In terms of biological role, GTP hydrolase that promotes the GTP-dependent binding of aminoacyl-tRNA to the A-site of ribosomes during protein biosynthesis. This chain is Elongation factor Tu, found in Halalkalibacterium halodurans (strain ATCC BAA-125 / DSM 18197 / FERM 7344 / JCM 9153 / C-125) (Bacillus halodurans).